A 235-amino-acid polypeptide reads, in one-letter code: Small ribosomal subunit protein eS4 (235 aa).

In terms of domain architecture, S4 RNA-binding spans 38-101; the sequence is IPLLVLVRDF…EKSYRILFDE (64 aa).

It belongs to the eukaryotic ribosomal protein eS4 family.

The sequence is that of Small ribosomal subunit protein eS4 (rps4e) from Archaeoglobus fulgidus (strain ATCC 49558 / DSM 4304 / JCM 9628 / NBRC 100126 / VC-16).